The sequence spans 370 residues: Glutathione S-transferase omega-like 2 (370 aa).

R15 provides a ligand contact to glutathione. C46 serves as the catalytic Nucleophile. The glutathione site is built by W79, R155, V158, E173, and S174. The GST C-terminal domain maps to 201–353 (PAQLKTQIDD…LHYTRSHTRI (153 aa)).

Belongs to the GST superfamily. Omega family. In terms of assembly, homodimer.

It is found in the cytoplasm. It catalyses the reaction RX + glutathione = an S-substituted glutathione + a halide anion + H(+). The catalysed reaction is L-dehydroascorbate + 2 glutathione = glutathione disulfide + L-ascorbate. In terms of biological role, active as '1-Cys' thiol transferase against beta-hydroxyethyl disulfide (HED), as dehydroascorbate reductase and as dimethylarsinic acid reductase, while not active against the standard GST substrate 1-chloro-2,4-dinitrobenzene (CDNB). May be involved in cell wall organization and biogenesis. This chain is Glutathione S-transferase omega-like 2, found in Saccharomyces cerevisiae (strain ATCC 204508 / S288c) (Baker's yeast).